A 482-amino-acid polypeptide reads, in one-letter code: Aspartyl/glutamyl-tRNA(Asn/Gln) amidotransferase subunit B (482 aa).

This sequence belongs to the GatB/GatE family. GatB subfamily. As to quaternary structure, heterotrimer of A, B and C subunits.

It carries out the reaction L-glutamyl-tRNA(Gln) + L-glutamine + ATP + H2O = L-glutaminyl-tRNA(Gln) + L-glutamate + ADP + phosphate + H(+). The catalysed reaction is L-aspartyl-tRNA(Asn) + L-glutamine + ATP + H2O = L-asparaginyl-tRNA(Asn) + L-glutamate + ADP + phosphate + 2 H(+). Its function is as follows. Allows the formation of correctly charged Asn-tRNA(Asn) or Gln-tRNA(Gln) through the transamidation of misacylated Asp-tRNA(Asn) or Glu-tRNA(Gln) in organisms which lack either or both of asparaginyl-tRNA or glutaminyl-tRNA synthetases. The reaction takes place in the presence of glutamine and ATP through an activated phospho-Asp-tRNA(Asn) or phospho-Glu-tRNA(Gln). The chain is Aspartyl/glutamyl-tRNA(Asn/Gln) amidotransferase subunit B from Azotobacter vinelandii (strain DJ / ATCC BAA-1303).